A 165-amino-acid chain; its full sequence is Xanthine-guanine phosphoribosyltransferase (165 aa).

Residues 41–42 (RG) and 98–106 (DDLTDTGKT) each bind 5-phospho-alpha-D-ribose 1-diphosphate. Asp99 contacts Mg(2+). Residues Asp102 and Ile145 each coordinate guanine. Positions 102 and 145 each coordinate xanthine. GMP is bound by residues 102-106 (DTGKT) and 144-145 (WI).

This sequence belongs to the purine/pyrimidine phosphoribosyltransferase family. XGPT subfamily. In terms of assembly, homotetramer. Mg(2+) is required as a cofactor.

Its subcellular location is the cell inner membrane. The catalysed reaction is GMP + diphosphate = guanine + 5-phospho-alpha-D-ribose 1-diphosphate. The enzyme catalyses XMP + diphosphate = xanthine + 5-phospho-alpha-D-ribose 1-diphosphate. It catalyses the reaction IMP + diphosphate = hypoxanthine + 5-phospho-alpha-D-ribose 1-diphosphate. Its pathway is purine metabolism; GMP biosynthesis via salvage pathway; GMP from guanine: step 1/1. It participates in purine metabolism; XMP biosynthesis via salvage pathway; XMP from xanthine: step 1/1. In terms of biological role, purine salvage pathway enzyme that catalyzes the transfer of the ribosyl-5-phosphate group from 5-phospho-alpha-D-ribose 1-diphosphate (PRPP) to the N9 position of the 6-oxopurines guanine and xanthine to form the corresponding ribonucleotides GMP (guanosine 5'-monophosphate) and XMP (xanthosine 5'-monophosphate), with the release of PPi. To a lesser extent, also acts on hypoxanthine. The protein is Xanthine-guanine phosphoribosyltransferase of Sinorhizobium medicae (strain WSM419) (Ensifer medicae).